The chain runs to 251 residues: MTDSATTNGDDRDPEIELFVKAGIDGESIGNCPFSQRLFMILWLKGVVFNVTTVDLKRKPADLHNLAPGTHPPFLTFNGDVKTDVNKIEEFLEETLTPEKYPKLAAKHRESNTAGIDIFSKFSAYIKNTKQQNNAALERGLTKALRKLDDYLNSPLPEEIDTNTHGDEKGSQRKFLDGDELTLADCNLLPKLHVVKIVAKKYRNYDIPAEMTGLWRYLKNAYARDEFTNTCAADSEIELAYADVARRLSRS.

Residues 1–98 form a required for insertion into the membrane region; the sequence is MTDSATTNGD…EEFLEETLTP (98 aa). A G-site motif is present at residues 32 to 35; it reads CPFS. Residues 34–54 traverse the membrane as a helical segment; sequence FSQRLFMILWLKGVVFNVTTV. Residues 101–241 enclose the GST C-terminal domain; the sequence is YPKLAAKHRE…AADSEIELAY (141 aa).

It belongs to the chloride channel CLIC family. Component of a multimeric complex consisting of several cytoskeletal proteins, including actin, ezrin, alpha-actinin, gelsolin, and IQGAP1. Interacts with AKAP9. Interacts with TPRN. TPRN, CLIC5 and PTPQR form concentric rings at the base of stereocilia and may form a complex. Interacts with EZR, MYO6 and RDX; the proteins may work together as a complex to stabilize linkages between the plasma membrane and subjacent actin cytoskeleton at the stereocilium base. In terms of tissue distribution, detected in lung and inner ear. Detected in embryonic cochlea, on microvilli-covered apical surfaces of interdental cells, columnar cells of Kolliker's organ, and on stereocilia of inner and outer hair cells (at protein level). Also detected in the eye, where it localizes to lens fiber cells in the lens epithelium (at protein level).

The protein resides in the golgi apparatus. Its subcellular location is the cytoplasm. It localises to the cytoskeleton. It is found in the microtubule organizing center. The protein localises to the centrosome. The protein resides in the cell cortex. Its subcellular location is the membrane. It localises to the apical cell membrane. It is found in the mitochondrion. The protein localises to the cell projection. The protein resides in the stereocilium. The enzyme catalyses Na(+)(in) = Na(+)(out). The catalysed reaction is K(+)(in) = K(+)(out). It carries out the reaction chloride(in) = chloride(out). With respect to regulation, inhibited by F-actin. Its function is as follows. In the soluble state, catalyzes glutaredoxin-like thiol disulfide exchange reactions with reduced glutathione as electron donor. Can insert into membranes and form non-selective ion channels almost equally permeable to Na(+), K(+) and Cl(-). Required for normal hearing. Necessary for the formation of stereocilia in the inner ear and normal development of the organ of Corti. Required for the proper localization of PTPRQ and RDX to the stereocilium base during postnatal maturation of hair bundles. Can insert into membranes and form poorly selective ion channels that may also transport chloride ions. Required for the development and/or maintenance of the proper glomerular endothelial cell and podocyte architecture. Plays a role in formation of the lens suture in the eye, which is important for normal optical properties of the lens. The chain is Chloride intracellular channel protein 5 (Clic5) from Mus musculus (Mouse).